Consider the following 397-residue polypeptide: Acetate kinase (397 aa).

Asparagine 7 contributes to the Mg(2+) binding site. Lysine 14 provides a ligand contact to ATP. Residue arginine 90 participates in substrate binding. Catalysis depends on aspartate 147, which acts as the Proton donor/acceptor. ATP contacts are provided by residues 207 to 211, 282 to 284, and 330 to 334; these read HLGNG, DFR, and GLGEN. A Mg(2+)-binding site is contributed by glutamate 383.

Belongs to the acetokinase family. As to quaternary structure, homodimer. Requires Mg(2+) as cofactor. The cofactor is Mn(2+).

The protein resides in the cytoplasm. The enzyme catalyses acetate + ATP = acetyl phosphate + ADP. Its pathway is metabolic intermediate biosynthesis; acetyl-CoA biosynthesis; acetyl-CoA from acetate: step 1/2. Its function is as follows. Catalyzes the formation of acetyl phosphate from acetate and ATP. Can also catalyze the reverse reaction. The chain is Acetate kinase from Clostridium botulinum (strain 657 / Type Ba4).